A 36-amino-acid chain; its full sequence is Photosystem I reaction center subunit VIII (36 aa).

Residues 6 to 26 form a helical membrane-spanning segment; the sequence is LPSIFVPLVGLVFPAIAMASL.

Belongs to the PsaI family.

The protein resides in the plastid. The protein localises to the chloroplast thylakoid membrane. Its function is as follows. May help in the organization of the PsaL subunit. This Liriodendron tulipifera (Tuliptree) protein is Photosystem I reaction center subunit VIII.